Here is a 113-residue protein sequence, read N- to C-terminus: U11-theraphotoxin-Hhn1l (113 aa).

An N-terminal signal peptide occupies residues 1–21 (MNTGRVTFLVVFLVAVSLGPA). The propeptide occupies 22 to 74 (DKEENPMEMQEKTQQGKNYLNFGENLVVPKLEELKAKLVEKESKKSKNSRQKR). 2 disulfides stabilise this stretch: Cys82-Cys95 and Cys89-Cys110.

The protein belongs to the neurotoxin 14 (magi-1) family. 01 (HNTX-16) subfamily. Expressed by the venom gland.

It localises to the secreted. Functionally, probable ion channel inhibitor. The protein is U11-theraphotoxin-Hhn1l of Cyriopagopus hainanus (Chinese bird spider).